The chain runs to 582 residues: uncharacterized protein (582 aa).

A compositionally biased stretch (basic and acidic residues) spans 1-23 (MAHEGSRQVRDRGVTRSKAEKVR). 3 disordered regions span residues 1–29 (MAHEGSRQVRDRGVTRSKAEKVRPPTVPV), 110–133 (AVAEDPTWGEDEEPSACTTDSWAQ), and 147–221 (LENF…SSAG). At S242 the chain carries Phosphoserine. 2 disordered regions span residues 310 to 331 (RPSASCQQQRAGHSDVRLSAHH) and 551 to 582 (LSSGVPEQEDKEGSTFPPVEQHPIQTGAPKPR). The segment covering 311-320 (PSASCQQQRA) has biased composition (polar residues).

This is an uncharacterized protein from Homo sapiens (Human).